A 335-amino-acid chain; its full sequence is ATP-dependent 6-phosphofructokinase (335 aa).

Gly-11 contributes to the ATP binding site. Residue 21–25 (RAVVR) participates in ADP binding. ATP contacts are provided by residues 72–73 (RY) and 102–105 (GDGS). Asp-103 contributes to the Mg(2+) binding site. A substrate-binding site is contributed by 125–127 (TID). The active-site Proton acceptor is Asp-127. Arg-154 lines the ADP pocket. Substrate contacts are provided by residues Arg-162 and 169–171 (MGR). ADP-binding positions include 185-187 (GAD) and 213-215 (KKH). Residues Glu-222, Arg-244, and 250 to 253 (HIQR) contribute to the substrate site.

This sequence belongs to the phosphofructokinase type A (PFKA) family. ATP-dependent PFK group I subfamily. Prokaryotic clade 'B1' sub-subfamily. As to quaternary structure, homotetramer. Requires Mg(2+) as cofactor.

The protein localises to the cytoplasm. The enzyme catalyses beta-D-fructose 6-phosphate + ATP = beta-D-fructose 1,6-bisphosphate + ADP + H(+). Its pathway is carbohydrate degradation; glycolysis; D-glyceraldehyde 3-phosphate and glycerone phosphate from D-glucose: step 3/4. With respect to regulation, allosterically activated by ADP and other diphosphonucleosides, and allosterically inhibited by phosphoenolpyruvate. In terms of biological role, catalyzes the phosphorylation of D-fructose 6-phosphate to fructose 1,6-bisphosphate by ATP, the first committing step of glycolysis. The polypeptide is ATP-dependent 6-phosphofructokinase (Streptococcus pneumoniae (strain CGSP14)).